The following is a 772-amino-acid chain: MATLKDIGVSAGINILTAFIFFIIFAFLRLQPFNDRVYFSKWYLRGLRSSPASGGGFAGRFVNLELRSYLKFLHWMPEALKMPERELIDHAGLDSVVYLRIYWLGLKIFAPIAMLAWAVLVPVNWTNNELELAKHFKNVTSSDIDKLTISNIPEGSNRFWAHIIMAYAFTIWTCYMLMKEYETVANMRLQFLASEGRRPDQFTVLVRNVPPDPDETVSELVEHFFLVNHPDNYLTHQVVCNANKLADLVSKKTKLQNWLDYYQLKYTRNNSQIRPITKLGCLGLCGQKVDAIEHYIAEVDKTSKEIAEERENVVNDQKSVMPASFVSFKTRWAAAVCAQTTQTRNPTEWLTEWAAEPRDIYWPNLAIPYVSLTVRRLVMNVAFFFLTFFFIIPIAFVQSLATIEGIEKVAPFLKVIIEKDFIKSLIQGLLAGIALKLFLIFLPAILMTMSKFEGFTSVSFLERRSASRYYIFNLVNVFLGSVIAGAAFEQLNSFLNQSPNQIPKTIGMAIPMKATFFITYIMVDGWAGVAGEILMLKPLIIYHLKNAFLVKTEKDREEAMNPGSIGFNTGEPQIQLYFLLGLVYAPVTPMLLPFILVFFALAYVVYRHQIINVYNQEYESAAAFWPDVHGRVITALIISQLLLMGLLGTKHAASAAPFLIALPVITIGFHRFCKGRFEPAFVRYPLQEAMMKDTLERAREPNLNLKGYLQDAYIHPVFKGGDNDDDGDMIGKLENEVIIVPTKRQSRRNTPAPSRISGESSPSLAVINGKEV.

Over 1 to 5 (MATLK) the chain is Extracellular. Residues 6–28 (DIGVSAGINILTAFIFFIIFAFL) traverse the membrane as a helical segment. Over 29–100 (RLQPFNDRVY…AGLDSVVYLR (72 aa)) the chain is Cytoplasmic. A helical membrane pass occupies residues 101–122 (IYWLGLKIFAPIAMLAWAVLVP). At 123–159 (VNWTNNELELAKHFKNVTSSDIDKLTISNIPEGSNRF) the chain is on the extracellular side. N138 carries N-linked (GlcNAc) asparagine glycosylation. A helical transmembrane segment spans residues 160 to 180 (WAHIIMAYAFTIWTCYMLMKE). The Cytoplasmic portion of the chain corresponds to 181–372 (YETVANMRLQ…PNLAIPYVSL (192 aa)). Residues 339–344 (QTTQTR) are cytoplasmic region required for homodimerization. Residues 373 to 398 (TVRRLVMNVAFFFLTFFFIIPIAFVQ) traverse the membrane as a helical segment. The Extracellular segment spans residues 399 to 424 (SLATIEGIEKVAPFLKVIIEKDFIKS). A helical membrane pass occupies residues 425 to 450 (LIQGLLAGIALKLFLIFLPAILMTMS). Residues 451–461 (KFEGFTSVSFL) are Cytoplasmic-facing. The chain crosses the membrane as a helical span at residues 462–485 (ERRSASRYYIFNLVNVFLGSVIAG). At 486–509 (AAFEQLNSFLNQSPNQIPKTIGMA) the chain is on the extracellular side. The helical transmembrane segment at 510-538 (IPMKATFFITYIMVDGWAGVAGEILMLKP) threads the bilayer. Residues 539-566 (LIIYHLKNAFLVKTEKDREEAMNPGSIG) are Cytoplasmic-facing. A helical transmembrane segment spans residues 567–587 (FNTGEPQIQLYFLLGLVYAPV). Residue T588 is a topological domain, extracellular. The chain crosses the membrane as a helical span at residues 589–606 (PMLLPFILVFFALAYVVY). Residues 607-624 (RHQIINVYNQEYESAAAF) are Cytoplasmic-facing. Residues 625–647 (WPDVHGRVITALIISQLLLMGLL) form a helical membrane-spanning segment. The Extracellular segment spans residues 648-653 (GTKHAA). The chain crosses the membrane as a helical span at residues 654–674 (SAAPFLIALPVITIGFHRFCK). Over 675 to 772 (GRFEPAFVRY…SLAVINGKEV (98 aa)) the chain is Cytoplasmic. The tract at residues 686 to 688 (LQE) is cytoplasmic region required for homodimerization. The interval 743 to 772 (KRQSRRNTPAPSRISGESSPSLAVINGKEV) is disordered. Positions 748–763 (RNTPAPSRISGESSPS) are enriched in polar residues.

It belongs to the CSC1 (TC 1.A.17) family. In terms of assembly, homodimer. Expressed in leaves, flowers, roots and guard cells.

It localises to the cell membrane. With respect to regulation, activated by mechanical pressure. Acts as a hyperosmolarity-gated non-selective cation channel that permeates Ca(2+) ions. Shows the following permeability sequence: K(+) &gt; Ba(2+) = Ca(2+) &gt; Na(+) = Mg(2+) = Cs(+). Mechanosensitive ion channel that converts mechanical stimuli into a flow of ions: activated in response to membrane stretch and poke. The chain is Hyperosmolality-gated Ca2+ permeable channel 1.1 from Arabidopsis thaliana (Mouse-ear cress).